The primary structure comprises 183 residues: Acyl-homoserine-lactone synthase (183 aa).

Belongs to the autoinducer synthase family.

It catalyses the reaction a fatty acyl-[ACP] + S-adenosyl-L-methionine = an N-acyl-L-homoserine lactone + S-methyl-5'-thioadenosine + holo-[ACP] + H(+). In terms of biological role, involved in the synthesis of the acyl-homoserine lactone (AHL) signal N-(3-hydroxydodecanoyl)-L-HSL (3-hydroxy-C(12)-HSL or OH-dDHL). Probably part of a quorum-sensing system with AnoR. The polypeptide is Acyl-homoserine-lactone synthase (Acinetobacter nosocomialis).